The following is a 103-amino-acid chain: Histone H4 type VIII (103 aa).

Residues 1-14 show a composition bias toward gly residues; that stretch reads MSGRGKGGKGLGKG. The segment at 1-20 is disordered; the sequence is MSGRGKGGKGLGKGGAKRHR. Ser2 carries the N-acetylserine modification. Ser2 is subject to Phosphoserine. An Asymmetric dimethylarginine; by PRMT1; alternate modification is found at Arg4. Arg4 is subject to Citrulline; alternate. Arg4 carries the omega-N-methylarginine; by PRMT1; alternate modification. Arg4 bears the Symmetric dimethylarginine; by PRMT5 and PRMT7; alternate mark. An N6-(2-hydroxyisobutyryl)lysine; alternate mark is found at Lys6, Lys9, Lys13, and Lys17. At Lys6 the chain carries N6-acetyl-N6-methyllysine; alternate. Residues Lys6, Lys9, Lys13, and Lys17 each carry the N6-acetyllysine modification. Lys6, Lys9, Lys13, and Lys17 each carry N6-butyryllysine; alternate. Residue Lys6 is modified to N6-glutaryllysine; alternate. N6-lactoyllysine; alternate occurs at positions 6, 9, 13, and 17. An N6-propionyllysine; alternate modification is found at Lys9. An N6-acetyl-N6-methyllysine; alternate modification is found at Lys13. An N6-glutaryllysine; alternate modification is found at Lys13. Position 13 is an N6-methyllysine; alternate (Lys13). Lys17 is subject to N6-propionyllysine; alternate. Position 21 is an N6-methyllysine; alternate (Lys21). Lys21 is modified (N6,N6,N6-trimethyllysine; alternate). Lys21 bears the N6,N6-dimethyllysine; alternate mark. Lys32 and Lys45 each carry N6-(2-hydroxyisobutyryl)lysine; alternate. Lys32 bears the N6-acetyllysine mark. Lys32 and Lys45 each carry N6-butyryllysine; alternate. Lys32 is subject to N6-glutaryllysine; alternate. Lys32 is subject to N6-lactoyllysine; alternate. Residues Lys32 and Lys45 each carry the N6-propionyllysine; alternate modification. N6-succinyllysine; alternate is present on Lys32. Lys32 is covalently cross-linked (Glycyl lysine isopeptide (Lys-Gly) (interchain with G-Cter in UFM1); alternate). Phosphoserine is present on Ser48. Tyr52 is modified (phosphotyrosine). The residue at position 60 (Lys60) is an N6-acetyllysine. N6-glutaryllysine; alternate is present on residues Lys60, Lys78, and Lys80. Lys60 bears the N6-(2-hydroxyisobutyryl)lysine mark. 2 positions are modified to N6-(2-hydroxyisobutyryl)lysine; alternate: Lys78 and Lys80. An N6-butyryllysine; alternate mark is found at Lys78 and Lys80. The residue at position 78 (Lys78) is an N6-lactoyllysine; alternate. Lys78 and Lys80 each carry N6-propionyllysine; alternate. The residue at position 78 (Lys78) is an N6-succinyllysine. Lys80 bears the N6-acetyllysine mark. At Tyr89 the chain carries Phosphotyrosine. Lys92 is modified (N6-(2-hydroxyisobutyryl)lysine; alternate). At Lys92 the chain carries N6-butyryllysine; alternate. Residue Lys92 is modified to N6-glutaryllysine; alternate. The residue at position 92 (Lys92) is an N6-lactoyllysine; alternate. Residue Lys92 is modified to N6-propionyllysine; alternate. Residue Lys92 is modified to N6-succinyllysine; alternate. Lys92 is modified (N6-acetyllysine; alternate). Lys92 participates in a covalent cross-link: Glycyl lysine isopeptide (Lys-Gly) (interchain with G-Cter in ubiquitin); alternate.

The protein belongs to the histone H4 family. In terms of assembly, the nucleosome is a histone octamer containing two molecules each of H2A, H2B, H3 and H4 assembled in one H3-H4 heterotetramer and two H2A-H2B heterodimers. The octamer wraps approximately 147 bp of DNA. In terms of processing, acetylation at Lys-6 (H4K5ac), Lys-9 (H4K8ac), Lys-13 (H4K12ac) and Lys-17 (H4K16ac) occurs in coding regions of the genome but not in heterochromatin. Post-translationally, citrullination at Arg-4 (H4R3ci) by PADI4 impairs methylation. Monomethylation and asymmetric dimethylation at Arg-4 (H4R3me1 and H4R3me2a, respectively) by PRMT1 favors acetylation at Lys-9 (H4K8ac) and Lys-13 (H4K12ac). Demethylation is performed by JMJD6. Symmetric dimethylation on Arg-4 (H4R3me2s) by the PRDM1/PRMT5 complex may play a crucial role in the germ-cell lineage. In terms of processing, monomethylated, dimethylated or trimethylated at Lys-21 (H4K20me1, H4K20me2, H4K20me3). Monomethylation is performed by KMT5A/SET8. Trimethylation is performed by KMT5B and KMT5C and induces gene silencing. Monomethylated at Lys-13 (H4K12me1) by N6AMT1; H4K12me1 modification is present at the promoters of numerous genes encoding cell cycle regulators. Post-translationally, acetyl-methylated at Lys-6 and Lys-13 (H4K5acme and H4K12acme, respectively), acetyl-methylation is an epigenetic mark of active chromatin associated with increased transcriptional initiation. Acetyl-methylation is formed by acetylation by EP300/p300 of lysine residues that are already monomethylated on the same side chain. H4K5acme and H4K12acme marks specifically bind BRD2. Ubiquitinated by the CUL4-DDB-RBX1 complex in response to ultraviolet irradiation. This may weaken the interaction between histones and DNA and facilitate DNA accessibility to repair proteins. Monoubiquitinated at Lys-92 of histone H4 (H4K91ub1) in response to DNA damage. The exact role of H4K91ub1 in DNA damage response is still unclear but it may function as a licensing signal for additional histone H4 post-translational modifications such as H4 Lys-21 methylation (H4K20me). In terms of processing, sumoylated, which is associated with transcriptional repression. Post-translationally, butyrylation of histones marks active promoters and competes with histone acetylation. Glutarylation at Lys-92 (H4K91glu) destabilizes nucleosomes by promoting dissociation of the H2A-H2B dimers from nucleosomes. In terms of processing, ufmylated; monofmylated by UFL1 at Lys-32 (H4K31Ufm1) in response to DNA damage. Post-translationally, lactylated in macrophages by EP300/P300 by using lactoyl-CoA directly derived from endogenous or exogenous lactate, leading to stimulates gene transcription. Delactylated by SIRT3 at Lys-17 (H4K16la).

Its subcellular location is the nucleus. The protein localises to the chromosome. Functionally, core component of nucleosome. Nucleosomes wrap and compact DNA into chromatin, limiting DNA accessibility to the cellular machineries which require DNA as a template. Histones thereby play a central role in transcription regulation, DNA repair, DNA replication and chromosomal stability. DNA accessibility is regulated via a complex set of post-translational modifications of histones, also called histone code, and nucleosome remodeling. The protein is Histone H4 type VIII (H4-VIII) of Gallus gallus (Chicken).